A 311-amino-acid polypeptide reads, in one-letter code: Mediator of RNA polymerase II transcription subunit 27 (311 aa).

Belongs to the Mediator complex subunit 27 family. Component of the Mediator complex.

The protein localises to the nucleus. In terms of biological role, component of the Mediator complex, a coactivator involved in the regulated transcription of nearly all RNA polymerase II-dependent genes. Mediator functions as a bridge to convey information from gene-specific regulatory proteins to the basal RNA polymerase II transcription machinery. Mediator is recruited to promoters by direct interactions with regulatory proteins and serves as a scaffold for the assembly of a functional preinitiation complex with RNA polymerase II and the general transcription factors. Required for the development of dopaminergic amacrine cells in the retina. May also negatively regulate the development of rod photoreceptor cells. The chain is Mediator of RNA polymerase II transcription subunit 27 (med27) from Danio rerio (Zebrafish).